The primary structure comprises 787 residues: Aconitate hydratase, mitochondrial (787 aa).

The N-terminal 33 residues, 1–33 (MISTRLARAGALAPKSRLFLGTRAFATVGDSPL), are a transit peptide targeting the mitochondrion. Substrate contacts are provided by residues glutamine 104 and 197–199 (DSH). Residues cysteine 390, cysteine 453, and cysteine 456 each contribute to the [4Fe-4S] cluster site. Substrate-binding residues include arginine 479 and arginine 484. Residues 529 to 559 (LQPPTGEGLPAKGYDPGRDTYQAPPADRSSV) are disordered. Substrate contacts are provided by residues arginine 612 and 675–676 (SR).

This sequence belongs to the aconitase/IPM isomerase family. The cofactor is [4Fe-4S] cluster.

It is found in the mitochondrion. It carries out the reaction citrate = D-threo-isocitrate. The enzyme catalyses (2R)-homocitrate = cis-homoaconitate + H2O. It functions in the pathway carbohydrate metabolism; tricarboxylic acid cycle; isocitrate from oxaloacetate: step 2/2. It participates in amino-acid biosynthesis; L-lysine biosynthesis via AAA pathway; L-alpha-aminoadipate from 2-oxoglutarate: step 2/5. In terms of biological role, catalyzes the isomerization of citrate to isocitrate via cis-aconitate, a step in the citric acid cycle. Also catalyzes the reversible dehydration of (R)-homocitrate to cis-homoaconitate, a step in the alpha-aminoadipate pathway for lysine biosynthesis. In Aspergillus fumigatus (strain ATCC MYA-4609 / CBS 101355 / FGSC A1100 / Af293) (Neosartorya fumigata), this protein is Aconitate hydratase, mitochondrial (acoA).